Here is a 483-residue protein sequence, read N- to C-terminus: Isocitrate dehydrogenase [NADP] (483 aa).

Residue threonine 74 coordinates NADP(+). Positions 83, 85, 89, 99, and 121 each coordinate D-threo-isocitrate. Aspartate 232 is a Mg(2+) binding site. NADP(+) contacts are provided by residues histidine 264 to isoleucine 270 and asparagine 277.

This sequence belongs to the isocitrate and isopropylmalate dehydrogenases family. In terms of assembly, homodimer. Requires Mg(2+) as cofactor. Mn(2+) is required as a cofactor.

It carries out the reaction D-threo-isocitrate + NADP(+) = 2-oxoglutarate + CO2 + NADPH. Catalyzes the oxidative decarboxylation of isocitrate to 2-oxoglutarate and carbon dioxide with the concomitant reduction of NADP(+). The chain is Isocitrate dehydrogenase [NADP] (icd) from Rickettsia prowazekii (strain Madrid E).